The sequence spans 440 residues: Alpha-ionylideneethane synthase aba3 (440 aa).

Belongs to the alpha-ionylideneethane synthase family.

Its pathway is hormone biosynthesis. Alpha-ionylideneethane synthase; part of the gene cluster that mediates the biosynthesis of abscisic acid (ABA), a phytohormone that acts antagonistically toward salicylic acid (SA), jasmonic acid (JA) and ethylene (ETH) signaling, to impede plant defense responses. The first step of the pathway catalyzes the reaction from farnesyl diphosphate to alpha-ionylideneethane performed by the alpha-ionylideneethane synthase aba3 via a three-step reaction mechanism involving 2 neutral intermediates, beta-farnesene and allofarnesene. The cytochrome P450 monooxygenase aba1 might then be involved in the conversion of alpha-ionylideneethane to alpha-ionylideneacetic acid. Alpha-ionylideneacetic acid is further converted to abscisic acid in 2 steps involving the cytochrome P450 monooxygenase aba2 and the short-chain dehydrogenase/reductase aba4, via the intermediates 1'-deoxy-ABA or 1',4'-trans-diol-ABA, depending on the order of action of these 2 enzymes. Aba2 is responsible for the hydroxylation of carbon atom C-1' and aba4 might be involved in the oxidation of the C-4' carbon atom. The polypeptide is Alpha-ionylideneethane synthase aba3 (Botryotinia fuckeliana (strain B05.10) (Noble rot fungus)).